A 286-amino-acid chain; its full sequence is Shikimate dehydrogenase (NADP(+)) (286 aa).

Residues Ser22–Ser24 and Thr71 each bind shikimate. The active-site Proton acceptor is the Lys75. Glu87 is an NADP(+) binding site. Shikimate-binding residues include Asn96 and Asp111. Residues Gly136 to Ala140, Asn160 to Arg165, and Ile225 contribute to the NADP(+) site. Position 227 (Tyr227) interacts with shikimate. Gly248 is an NADP(+) binding site.

This sequence belongs to the shikimate dehydrogenase family. In terms of assembly, homodimer.

It catalyses the reaction shikimate + NADP(+) = 3-dehydroshikimate + NADPH + H(+). It functions in the pathway metabolic intermediate biosynthesis; chorismate biosynthesis; chorismate from D-erythrose 4-phosphate and phosphoenolpyruvate: step 4/7. Its function is as follows. Involved in the biosynthesis of the chorismate, which leads to the biosynthesis of aromatic amino acids. Catalyzes the reversible NADPH linked reduction of 3-dehydroshikimate (DHSA) to yield shikimate (SA). The chain is Shikimate dehydrogenase (NADP(+)) from Sinorhizobium medicae (strain WSM419) (Ensifer medicae).